Here is a 290-residue protein sequence, read N- to C-terminus: Bifunctional protein FolD (290 aa).

NADP(+) is bound by residues 166–168, Ser191, and Ile232; that span reads GQS.

This sequence belongs to the tetrahydrofolate dehydrogenase/cyclohydrolase family. In terms of assembly, homodimer.

It catalyses the reaction (6R)-5,10-methylene-5,6,7,8-tetrahydrofolate + NADP(+) = (6R)-5,10-methenyltetrahydrofolate + NADPH. It carries out the reaction (6R)-5,10-methenyltetrahydrofolate + H2O = (6R)-10-formyltetrahydrofolate + H(+). It participates in one-carbon metabolism; tetrahydrofolate interconversion. In terms of biological role, catalyzes the oxidation of 5,10-methylenetetrahydrofolate to 5,10-methenyltetrahydrofolate and then the hydrolysis of 5,10-methenyltetrahydrofolate to 10-formyltetrahydrofolate. This chain is Bifunctional protein FolD, found in Halorhodospira halophila (strain DSM 244 / SL1) (Ectothiorhodospira halophila (strain DSM 244 / SL1)).